The sequence spans 346 residues: Heat-inducible transcription repressor HrcA (346 aa).

The protein belongs to the HrcA family.

Functionally, negative regulator of class I heat shock genes (grpE-dnaK-dnaJ and groELS operons). Prevents heat-shock induction of these operons. This Kineococcus radiotolerans (strain ATCC BAA-149 / DSM 14245 / SRS30216) protein is Heat-inducible transcription repressor HrcA.